A 430-amino-acid polypeptide reads, in one-letter code: CinA-like protein (430 aa).

It belongs to the CinA family.

The sequence is that of CinA-like protein from Mycobacterium tuberculosis (strain ATCC 25177 / H37Ra).